The sequence spans 181 residues: Cytochrome P450 monooxygenase dtpC (181 aa).

Cysteine 125 is a binding site for heme.

Belongs to the cytochrome P450 family. Heme is required as a cofactor.

Its pathway is alkaloid biosynthesis. The protein operates within secondary metabolite biosynthesis. In terms of biological role, cytochrome P450 monooxygenase; part of the gene cluster that mediates the biosynthesis of the dimeric diketopiperazine alkaloid ditryptophenaline. The nonribosomal peptide synthase dtpA accepts L-tryptophan and L-phenylalanine as its substrates and forms the phenylalanyl-tryptophanyl cyclic dipeptide product cyclophenylalanyltryptophenyl. The N-methyltransferase dtpB is responsible for the N-methylation of cyclophenylalanyltryptophenyl to yield cyclo-N-methylphenylalanyltryptophenyl. The cytochrome P450 monooxygenase is responsible not only for pyrroloindole ring formation but also for concurrent dimerization of N-methylphenylalanyltryptophanyl diketopiperazine monomers into a homodimeric product. This is Cytochrome P450 monooxygenase dtpC from Aspergillus flavus (strain ATCC 200026 / FGSC A1120 / IAM 13836 / NRRL 3357 / JCM 12722 / SRRC 167).